Consider the following 556-residue polypeptide: Arginine--tRNA ligase (556 aa).

A 'HIGH' region motif is present at residues 132-142 (ANPTGDLHLGH).

This sequence belongs to the class-I aminoacyl-tRNA synthetase family. As to quaternary structure, monomer.

Its subcellular location is the cytoplasm. It carries out the reaction tRNA(Arg) + L-arginine + ATP = L-arginyl-tRNA(Arg) + AMP + diphosphate. This Bacillus subtilis (strain 168) protein is Arginine--tRNA ligase (argS).